A 753-amino-acid polypeptide reads, in one-letter code: 5-methyltetrahydropteroyltriglutamate--homocysteine methyltransferase (753 aa).

Residues arginine 17–lysine 20 and lysine 117 contribute to the 5-methyltetrahydropteroyltri-L-glutamate site. Residues isoleucine 431–serine 433 and glutamate 484 each bind L-homocysteine. L-methionine-binding positions include isoleucine 431 to serine 433 and glutamate 484. Residues arginine 515 to cysteine 516 and tryptophan 561 each bind 5-methyltetrahydropteroyltri-L-glutamate. Residue aspartate 599 coordinates L-homocysteine. Aspartate 599 provides a ligand contact to L-methionine. Glutamate 605 provides a ligand contact to 5-methyltetrahydropteroyltri-L-glutamate. The Zn(2+) site is built by histidine 641, cysteine 643, and glutamate 665. Histidine 694 functions as the Proton donor in the catalytic mechanism. Cysteine 726 contributes to the Zn(2+) binding site.

It belongs to the vitamin-B12 independent methionine synthase family. It depends on Zn(2+) as a cofactor.

The enzyme catalyses 5-methyltetrahydropteroyltri-L-glutamate + L-homocysteine = tetrahydropteroyltri-L-glutamate + L-methionine. Its pathway is amino-acid biosynthesis; L-methionine biosynthesis via de novo pathway; L-methionine from L-homocysteine (MetE route): step 1/1. In terms of biological role, catalyzes the transfer of a methyl group from 5-methyltetrahydrofolate to homocysteine resulting in methionine formation. The polypeptide is 5-methyltetrahydropteroyltriglutamate--homocysteine methyltransferase (Escherichia coli O6:H1 (strain CFT073 / ATCC 700928 / UPEC)).